The primary structure comprises 224 residues: Prothoracicotropic hormone (224 aa).

Residues Met1–Leu29 form the signal peptide. 3 disulfide bridges follow: Cys132/Cys169, Cys155/Cys211, and Cys163/Cys213. Residue Asn156 is glycosylated (N-linked (GlcNAc...) asparagine).

In terms of assembly, homodimer; disulfide-linked. As to expression, PTTH is synthesized by two dorsolateral neurosecretory cells of the Bombyx brain.

Functionally, PTTH is a brain secretory polypeptide of insects which stimulates the prothoracic glands to produce and release ecdysone, the steroid essential to insect development. Peptides P2K and P6K are presumed to be cleaved post-translationally and may play some unknown physiologically or developmentally important functions. This chain is Prothoracicotropic hormone, found in Bombyx mori (Silk moth).